Here is a 397-residue protein sequence, read N- to C-terminus: MQLLGRVICFVVGILLSGGPTGTISAVDPEANMNVTEIIMHWGYPEHSVQTGDGYILGVHRIPHGRKNQFDKGPKPVVYLQWRHGFLADSSNWVTNIDNNSLGFILADAGFDVWMGNSRGNTWSRKHKTLSVSQDEYWAFSFDEMAKYDLPASINYILNKTGQEQLYNVGHSQGCTIGFIAFSQMPELAKKVKMFFALAPVLSLNFASGPMVKLGRLPDLLLEDLFGQKQFLPQSAMVKWLSTHICTHVIMKELCANIFFLICGFNEKNLNMSRVDVYTTHCPAGTSVQNMVHWTQVVKYHKLQAFDWGSSDKNYFHYNQSYPPLYSIKDMQLPTALWSGGKDWLADTSDINILLTEIPTLVYHKNIPEWDHLDFIWGLDAPWRLYNEVVSLMKKYQ.

A signal peptide spans Met1–Ser25. A propeptide spans Ala26–Lys72 (removed in mature form). 3 N-linked (GlcNAc...) asparagine glycosylation sites follow: Asn34, Asn99, and Asn159. Positions His84–Gly378 constitute an AB hydrolase-1 domain. The active-site Charge relay system is Ser172. N-linked (GlcNAc...) asparagine glycans are attached at residues Asn271 and Asn319. His372 (charge relay system) is an active-site residue.

Belongs to the AB hydrolase superfamily. Lipase family. As to quaternary structure, monomer. In terms of processing, glycosylation is not essential for catalytic activity.

Its subcellular location is the lysosome. It carries out the reaction a sterol ester + H2O = a sterol + a fatty acid + H(+). The enzyme catalyses cholesteryl (9Z-octadecenoate) + H2O = cholesterol + (9Z)-octadecenoate + H(+). The catalysed reaction is a triacylglycerol + H2O = a 1,2-diacylglycerol + a fatty acid + H(+). It catalyses the reaction 1,2-di-(9Z-octadecenoyl)-glycerol + (9Z)-octadecenoate + H(+) = 1,2,3-tri-(9Z-octadecenoyl)-glycerol + H2O. It carries out the reaction a 1,2-diacylglycerol + H2O = a 1-acylglycerol + a fatty acid + H(+). The enzyme catalyses 1,2-di-(9Z-octadecenoyl)-glycerol + H2O = 1-(9Z-octadecenoyl)-glycerol + (9Z)-octadecenoate + H(+). The catalysed reaction is a 1,3-diacylglycerol + H2O = a 1-acylglycerol + a fatty acid + H(+). It catalyses the reaction 1,3-di-(9Z-octadecenoyl)-glycerol + H2O = 1-(9Z-octadecenoyl)-glycerol + (9Z)-octadecenoate + H(+). Catalyzes the deacylation of cholesteryl ester core lipids of endocytosed low density lipoproteins to generate free fatty acids and cholesterol. Hydrolyzes triglycerides (1,2,3-triacylglycerol) and diglycerides (such as 1,2-diacylglycerol and 1,3-diacylglycerol) with preference for the acyl moieties at the sn-1 or sn-3 positions. The chain is Lysosomal acid lipase/cholesteryl ester hydrolase (Lipa) from Rattus norvegicus (Rat).